The following is an 81-amino-acid chain: Short neurotoxin SN160 (81 aa).

The signal sequence occupies residues 1-21; that stretch reads MKTLLLTLVVVTIVCLDLGYT. Cystine bridges form between C24–C43, C38–C60, C62–C73, and C74–C79.

It belongs to the three-finger toxin family. Short-chain subfamily. Type I alpha-neurotoxin sub-subfamily. In terms of tissue distribution, expressed by the venom gland.

The protein resides in the secreted. Binds to muscle nicotinic acetylcholine receptor (nAChR) and inhibit acetylcholine from binding to the receptor, thereby impairing neuromuscular transmission. This Hydrophis hardwickii (Hardwick's spine-bellied seasnake) protein is Short neurotoxin SN160.